The sequence spans 417 residues: BSD domain-containing protein 1-B (417 aa).

The 53-residue stretch at 153-205 (WLAYWDPEQRKAEISEPLVTSPSIRALFTKMVPAAVSHSEFWQRYFYKVHQLE) folds into the BSD domain. Disordered regions lie at residues 215-234 (KQRANQSVHSEEPKWEEEEE), 262-292 (HVEDKSEKTAELNRDHTSVTSPSESSESISP), and 323-390 (AAET…DFDM). A compositionally biased stretch (basic and acidic residues) spans 262–278 (HVEDKSEKTAELNRDHT). Over residues 281 to 292 (TSPSESSESISP) the composition is skewed to low complexity. The span at 332 to 343 (PVEQTGKSNAQM) shows a compositional bias: polar residues. Basic and acidic residues predominate over residues 345–356 (THREDPPSDLRV). The span at 360–379 (NSDSGKSTPSNNGQKGSSTD) shows a compositional bias: polar residues. Positions 380-390 (VSEDWEKDFDM) are enriched in acidic residues.

The polypeptide is BSD domain-containing protein 1-B (bsdc1-b) (Xenopus laevis (African clawed frog)).